The chain runs to 51 residues: Insulin (51 aa).

Cystine bridges form between Cys-8/Cys-37, Cys-20/Cys-50, and Cys-36/Cys-41.

The protein belongs to the insulin family. As to quaternary structure, heterodimer of a B chain and an A chain linked by two disulfide bonds.

Its subcellular location is the secreted. Its function is as follows. Insulin decreases blood glucose concentration. It increases cell permeability to monosaccharides, amino acids and fatty acids. It accelerates glycolysis, the pentose phosphate cycle, and glycogen synthesis in liver. The polypeptide is Insulin (ins) (Platichthys flesus (European flounder)).